The following is a 92-amino-acid chain: Small ribosomal subunit protein uS15c (92 aa).

Belongs to the universal ribosomal protein uS15 family. Part of the 30S ribosomal subunit.

The protein localises to the plastid. Its subcellular location is the chloroplast. The sequence is that of Small ribosomal subunit protein uS15c (rps15-A) from Lemna minor (Common duckweed).